The primary structure comprises 208 residues: Uracil phosphoribosyltransferase (208 aa).

Residues R78, R103, and D130–S138 each bind 5-phospho-alpha-D-ribose 1-diphosphate. Residues I193 and G198–A200 contribute to the uracil site. D199 is a binding site for 5-phospho-alpha-D-ribose 1-diphosphate.

Belongs to the UPRTase family. Mg(2+) is required as a cofactor.

It catalyses the reaction UMP + diphosphate = 5-phospho-alpha-D-ribose 1-diphosphate + uracil. It functions in the pathway pyrimidine metabolism; UMP biosynthesis via salvage pathway; UMP from uracil: step 1/1. Its activity is regulated as follows. Allosterically activated by GTP. Functionally, catalyzes the conversion of uracil and 5-phospho-alpha-D-ribose 1-diphosphate (PRPP) to UMP and diphosphate. The chain is Uracil phosphoribosyltransferase from Thermosipho africanus (strain TCF52B).